A 555-amino-acid chain; its full sequence is Vetispiradiene synthase 1 (555 aa).

5 residues coordinate Mg(2+): Asp308, Asp312, Asp451, Thr455, and Glu459. Positions 308-312 (DDTFD) match the DDXXD motif motif.

This sequence belongs to the terpene synthase family. Tpsa subfamily. It depends on Mg(2+) as a cofactor.

The protein localises to the cytoplasm. The enzyme catalyses (2E,6E)-farnesyl diphosphate = (-)-vetispiradiene + diphosphate. Its pathway is secondary metabolite biosynthesis; terpenoid biosynthesis. Sesquiterpene synthase that catalyzes the formation of vetispiradiene from trans,trans-farnesyl diphosphate. The initial internal cyclization produces the monocyclic intermediate germacrene A. The protein is Vetispiradiene synthase 1 of Hyoscyamus muticus (Egyptian henbane).